The chain runs to 320 residues: L-lactate dehydrogenase (320 aa).

NAD(+) contacts are provided by residues Val19, Asp40, Arg45, and 85–86 (GA). Residues Gln88 and Arg94 each contribute to the substrate site. NAD(+) contacts are provided by residues Ser107, 124-126 (ITN), and Ser149. 126–129 (NPVD) contributes to the substrate binding site. 154 to 157 (DSAR) is a substrate binding site. Residues Arg159 and His174 each coordinate beta-D-fructose 1,6-bisphosphate. The active-site Proton acceptor is the His181. Position 228 is a phosphotyrosine (Tyr228). Thr237 is a substrate binding site.

This sequence belongs to the LDH/MDH superfamily. LDH family. As to quaternary structure, homotetramer.

The protein localises to the cytoplasm. The catalysed reaction is (S)-lactate + NAD(+) = pyruvate + NADH + H(+). It functions in the pathway fermentation; pyruvate fermentation to lactate; (S)-lactate from pyruvate: step 1/1. Allosterically activated by fructose 1,6-bisphosphate (FBP). Functionally, catalyzes the conversion of lactate to pyruvate. This is L-lactate dehydrogenase from Bifidobacterium animalis subsp. lactis (strain AD011).